We begin with the raw amino-acid sequence, 418 residues long: NADH-quinone oxidoreductase subunit H (418 aa).

Helical transmembrane passes span 15–35, 83–103, 123–143, 164–184, 197–217, 262–282, 287–307, 321–341, and 349–369; these read LVLG…LVAI, FVYF…FAFI, LPVA…GIVL, VISY…YAGS, VWFV…MVGE, LATA…MWAG, WWPV…YFWL, GLGW…AAVI, and YAHW…ALVL. The disordered stretch occupies residues 394–418; sequence AAHRAGFHPGIPDTAAAGESAGGRE.

The protein belongs to the complex I subunit 1 family. In terms of assembly, NDH-1 is composed of 14 different subunits. Subunits NuoA, H, J, K, L, M, N constitute the membrane sector of the complex.

It is found in the cell membrane. It carries out the reaction a quinone + NADH + 5 H(+)(in) = a quinol + NAD(+) + 4 H(+)(out). Functionally, NDH-1 shuttles electrons from NADH, via FMN and iron-sulfur (Fe-S) centers, to quinones in the respiratory chain. The immediate electron acceptor for the enzyme in this species is believed to be menaquinone. Couples the redox reaction to proton translocation (for every two electrons transferred, four hydrogen ions are translocated across the cytoplasmic membrane), and thus conserves the redox energy in a proton gradient. This subunit may bind ubiquinone. The sequence is that of NADH-quinone oxidoreductase subunit H from Mycobacterium avium (strain 104).